A 271-amino-acid chain; its full sequence is Integral membrane protein 2C (271 aa).

Residue T41 is modified to Phosphothreonine. A helical; Signal-anchor for type II membrane protein membrane pass occupies residues 59 to 79; sequence VGGVCYLSMGMVVLLMGLVFA. One can recognise a BRICHOS domain in the interval 140–234; sequence FGGGDPADII…LCSGKDTYRL (95 aa). A disulfide bridge connects residues C167 and C226. Residue N173 is glycosylated (N-linked (GlcNAc...) asparagine).

Belongs to the ITM2 family. As to quaternary structure, interacts with BACE1. Interacts with APP. Interacts with STMN2. Type I membrane-bound, as well as soluble, furin has a pre-eminent role in ITM2C proteolytic processing. PCSK7 and PCSK5 may also be involved although to a lesser extent. The soluble form of PCSK7 is incapable of processing ITM2C. Fails to undergo shedding by ADAM10 and intramembrane cleavage by SPPL2B.

The protein localises to the lysosome membrane. It localises to the cell membrane. Its function is as follows. Negative regulator of amyloid-beta peptide production. May inhibit the processing of APP by blocking its access to alpha- and beta-secretase. Binding to the beta-secretase-cleaved APP C-terminal fragment is negligible, suggesting that ITM2C is a poor gamma-secretase cleavage inhibitor. May play a role in TNF-induced cell death and neuronal differentiation. This Bos taurus (Bovine) protein is Integral membrane protein 2C (ITM2C).